An 89-amino-acid polypeptide reads, in one-letter code: Cell division protein FtsL (89 aa).

The Cytoplasmic portion of the chain corresponds to 1 to 22; that stretch reads MIDRKHYHLVGSIGKDILNNGK. Residues 23–40 form a helical membrane-spanning segment; that stretch reads LPALLLIAVLASSSLVVI. Over 41-89 the chain is Periplasmic; sequence TTYQTRRLTVEREQLLLEQNILDIEWRNLILEDNVISDQSRFEFVATEQ.

Belongs to the FtsL family. As to quaternary structure, part of a complex composed of FtsB, FtsL and FtsQ.

It is found in the cell inner membrane. In terms of biological role, essential cell division protein. May link together the upstream cell division proteins, which are predominantly cytoplasmic, with the downstream cell division proteins, which are predominantly periplasmic. The chain is Cell division protein FtsL from Moranella endobia (strain PCIT).